We begin with the raw amino-acid sequence, 1234 residues long: DNA-directed RNA polymerase I subunit RPA2 (1234 aa).

The segment at 1119–1150 (CRQCGSFLSTQPTVSPFIGKRKAVSTVRCRNC) adopts a C4-type zinc-finger fold.

The protein belongs to the RNA polymerase beta chain family. As to quaternary structure, component of the RNA polymerase I (Pol I) complex consisting of 14 subunits.

It localises to the nucleus. The protein resides in the nucleolus. It catalyses the reaction RNA(n) + a ribonucleoside 5'-triphosphate = RNA(n+1) + diphosphate. DNA-dependent RNA polymerase catalyzes the transcription of DNA into RNA using the four ribonucleoside triphosphates as substrates. Second largest core component of RNA polymerase I which synthesizes ribosomal RNA precursors. Proposed to contribute to the polymerase catalytic activity and forms the polymerase active center together with the largest subunit. Pol I is composed of mobile elements and RPA2 is part of the core element with the central large cleft and probably a clamp element that moves to open and close the cleft. The polypeptide is DNA-directed RNA polymerase I subunit RPA2 (acr-2) (Neurospora crassa (strain ATCC 24698 / 74-OR23-1A / CBS 708.71 / DSM 1257 / FGSC 987)).